A 344-amino-acid chain; its full sequence is Dihydroorotase (344 aa).

Zn(2+) is bound by residues histidine 13 and histidine 15. Substrate is bound by residues 15 to 17 and asparagine 41; that span reads HLR. Lysine 98, histidine 135, and histidine 173 together coordinate Zn(2+). At lysine 98 the chain carries N6-carboxylysine. Histidine 135 contacts substrate. Position 218 (leucine 218) interacts with substrate. Residue aspartate 247 participates in Zn(2+) binding. Aspartate 247 is a catalytic residue. The substrate site is built by histidine 251 and alanine 263.

It belongs to the metallo-dependent hydrolases superfamily. DHOase family. Class II DHOase subfamily. In terms of assembly, homodimer. Zn(2+) serves as cofactor.

It carries out the reaction (S)-dihydroorotate + H2O = N-carbamoyl-L-aspartate + H(+). It participates in pyrimidine metabolism; UMP biosynthesis via de novo pathway; (S)-dihydroorotate from bicarbonate: step 3/3. Functionally, catalyzes the reversible cyclization of carbamoyl aspartate to dihydroorotate. This is Dihydroorotase from Neisseria meningitidis serogroup C (strain 053442).